The chain runs to 749 residues: Phosphate-regulating neutral endopeptidase PHEX (749 aa).

Residues 1–20 (MEAETGSSVETGKKANRGTR) lie on the Cytoplasmic side of the membrane. Residues 21–41 (IALVVFVGGTLVLGTILFLVS) traverse the membrane as a helical; Signal-anchor for type II membrane protein segment. Over 42–641 (QGLLSLQAKQ…LNVKGKRTLG (600 aa)) the chain is Extracellular. The Peptidase M13 domain occupies 53–749 (YCLKPECIEA…NRGMDSCRLW (697 aa)). C54 and C59 are oxidised to a cystine. 7 N-linked (GlcNAc...) asparagine glycosylation sites follow: N71, N238, N263, N290, N301, N377, and N484. 4 disulfide bridges follow: C77–C733, C85–C693, C142–C406, and C617–C746. Residue H580 coordinates Zn(2+). Residue E581 is part of the active site. Zn(2+) is bound by residues H584 and E642. D646 acts as the Proton donor in catalysis. An N-linked (GlcNAc...) asparagine glycan is attached at N736.

This sequence belongs to the peptidase M13 family. Interacts with MEPE; the interaction is zinc-dependent (via ASARM motif). Zn(2+) serves as cofactor. As to expression, specifically expressed in ovary. Expressed at low levels in kidney.

The protein localises to the cell membrane. Peptidase that cleaves SIBLING (small integrin-binding ligand, N-linked glycoprotein)-derived ASARM peptides, thus regulating their biological activity. Cleaves ASARM peptides between Ser and Glu or Asp residues. Regulates osteogenic cell differentiation and bone mineralization through the cleavage of the MEPE-derived ASARM peptide. Promotes dentin mineralization and renal phosphate reabsorption by cleaving DMP1- and MEPE-derived ASARM peptides. Inhibits the cleavage of MEPE by CTSB/cathepsin B thus preventing MEPE degradation. This Homo sapiens (Human) protein is Phosphate-regulating neutral endopeptidase PHEX (PHEX).